The sequence spans 613 residues: Protein CER1-like 2 (613 aa).

6 consecutive transmembrane segments (helical) span residues 13–33 (WTPL…DSIY), 44–64 (LLIV…ISLS), 95–115 (IIFN…TSTI), 122–142 (GVIL…YWFH), 182–202 (LILG…VVSI), and 322–342 (YLFL…SFSF). The Fatty acid hydroxylase domain maps to 134 to 268 (VEFIYYWFHR…MPMYDYIYGT (135 aa)).

It belongs to the sterol desaturase family. As to expression, not detected in any tissues.

Its subcellular location is the membrane. This Arabidopsis thaliana (Mouse-ear cress) protein is Protein CER1-like 2.